A 389-amino-acid chain; its full sequence is Radial spoke head protein 3 homolog B (389 aa).

Residues 63-106 are disordered; that stretch reads PTGQVPGQPDPLELQRQQQARRRALARKRAQEQLKPRTPEPVEG. Positions 81-90 are enriched in basic residues; the sequence is QARRRALARK. Residues 91–106 are compositionally biased toward basic and acidic residues; sequence RAQEQLKPRTPEPVEG. T143 is subject to Phosphothreonine; by MAPK1. The stretch at 206–242 forms a coiled coil; that stretch reads YEEIRNVELAEVQRLEEQERRHREEKERRKKQQWEIV. The interval 332–389 is disordered; that stretch reads EAMPPGQKTNVINGPNTVTDPSVTTLHTQKPVLDRVSSQPAPSQERKPVEEGGHLMAE. Over residues 338–359 the composition is skewed to polar residues; it reads QKTNVINGPNTVTDPSVTTLHT. The span at 375-389 shows a compositional bias: basic and acidic residues; that stretch reads QERKPVEEGGHLMAE.

Belongs to the flagellar radial spoke RSP3 family. Component of the axonemal radial spoke 1 (RS1) and 2 (RS2) complexes, at least composed of spoke head proteins RSPH1, RSPH3B, RSPH9 and the cilia-specific component RSPH4A or sperm-specific component RSPH6A, spoke stalk proteins RSPH14, DNAJB13, DYDC1, ROPN1L and NME5, and the RS1 complex-specific anchor protein IQUB. Interacts with IQUB. Interacts with phosphorylated MAPK1. Interacts with MEK1. Interacts with PKA regulatory subunits PRKAR1A and PRKAR1B. Interacts with RSPH1. Interacts with RSPH4A. Interacts with RSPH6A. Interacts with RSPH9. Interacts with LRRC23. As to expression, expressed in ependymal cells (at protein level).

The protein localises to the cytoplasm. The protein resides in the cytoskeleton. It is found in the cilium axoneme. Its subcellular location is the flagellum axoneme. In terms of biological role, functions as part of axonemal radial spoke complexes that play an important part in the motility of sperm and cilia. Functions as a protein kinase A-anchoring protein that scaffolds the cAMP-dependent protein kinase holoenzyme. May serve as a point of convergence for MAPK and PKA signaling in cilia. This is Radial spoke head protein 3 homolog B (Rsph3b) from Mus musculus (Mouse).